We begin with the raw amino-acid sequence, 402 residues long: 1-deoxy-D-xylulose 5-phosphate reductoisomerase (402 aa).

Positions 10, 11, 12, 13, 36, 38, and 124 each coordinate NADPH. Lys-125 is a binding site for 1-deoxy-D-xylulose 5-phosphate. Residue Glu-126 coordinates NADPH. Asp-150 lines the Mn(2+) pocket. Residues Ser-151, Glu-152, Ser-186, and His-209 each contribute to the 1-deoxy-D-xylulose 5-phosphate site. Mn(2+) is bound at residue Glu-152. Position 215 (Gly-215) interacts with NADPH. Ser-222, Asn-227, Lys-228, and Glu-231 together coordinate 1-deoxy-D-xylulose 5-phosphate. Mn(2+) is bound at residue Glu-231.

Belongs to the DXR family. It depends on Mg(2+) as a cofactor. Mn(2+) serves as cofactor.

It catalyses the reaction 2-C-methyl-D-erythritol 4-phosphate + NADP(+) = 1-deoxy-D-xylulose 5-phosphate + NADPH + H(+). It participates in isoprenoid biosynthesis; isopentenyl diphosphate biosynthesis via DXP pathway; isopentenyl diphosphate from 1-deoxy-D-xylulose 5-phosphate: step 1/6. Functionally, catalyzes the NADPH-dependent rearrangement and reduction of 1-deoxy-D-xylulose-5-phosphate (DXP) to 2-C-methyl-D-erythritol 4-phosphate (MEP). This Vibrio cholerae serotype O1 (strain ATCC 39541 / Classical Ogawa 395 / O395) protein is 1-deoxy-D-xylulose 5-phosphate reductoisomerase.